Reading from the N-terminus, the 77-residue chain is Translation initiation factor IF-1, chloroplastic (77 aa).

The 71-residue stretch at 1–71 folds into the S1-like domain; sequence MKEQKWIHEG…TRGRIIYRLR (71 aa).

This sequence belongs to the IF-1 family. In terms of assembly, component of the 30S ribosomal translation pre-initiation complex which assembles on the 30S ribosome in the order IF-2 and IF-3, IF-1 and N-formylmethionyl-tRNA(fMet); mRNA recruitment can occur at any time during PIC assembly.

It localises to the plastid. The protein localises to the chloroplast. One of the essential components for the initiation of protein synthesis. Stabilizes the binding of IF-2 and IF-3 on the 30S subunit to which N-formylmethionyl-tRNA(fMet) subsequently binds. Helps modulate mRNA selection, yielding the 30S pre-initiation complex (PIC). Upon addition of the 50S ribosomal subunit IF-1, IF-2 and IF-3 are released leaving the mature 70S translation initiation complex. This Spinacia oleracea (Spinach) protein is Translation initiation factor IF-1, chloroplastic.